We begin with the raw amino-acid sequence, 166 residues long: Large ribosomal subunit protein uL10 (166 aa).

Belongs to the universal ribosomal protein uL10 family. In terms of assembly, part of the ribosomal stalk of the 50S ribosomal subunit. The N-terminus interacts with L11 and the large rRNA to form the base of the stalk. The C-terminus forms an elongated spine to which L12 dimers bind in a sequential fashion forming a multimeric L10(L12)X complex.

Functionally, forms part of the ribosomal stalk, playing a central role in the interaction of the ribosome with GTP-bound translation factors. This chain is Large ribosomal subunit protein uL10, found in Shewanella amazonensis (strain ATCC BAA-1098 / SB2B).